Consider the following 160-residue polypeptide: MAQRTEKEETEFKVLETLTTTTTTLCTNNCGVTANPATNNMCQKCFNASLVSAAAGVVESGSILKRSARSVNLRSSPAKVVIRPREIDAVKKRDQQIVNRCSGCRKKVGLTGFRCRCGELFCSEHRYSDRHDCSYDYKTAGREAIARENPVVKAAKMVKV.

An A20-type zinc finger spans residues 20-54; the sequence is TTTTTLCTNNCGVTANPATNNMCQKCFNASLVSAA. The Zn(2+) site is built by cysteine 26, cysteine 30, cysteine 42, cysteine 45, cysteine 101, cysteine 104, cysteine 115, cysteine 117, cysteine 122, histidine 125, histidine 131, and cysteine 133. An AN1-type zinc finger spans residues 95 to 141; sequence QQIVNRCSGCRKKVGLTGFRCRCGELFCSEHRYSDRHDCSYDYKTAG.

May be involved in environmental stress response. The sequence is that of Zinc finger A20 and AN1 domain-containing stress-associated protein 5 (SAP5) from Arabidopsis thaliana (Mouse-ear cress).